We begin with the raw amino-acid sequence, 192 residues long: Cytochrome b-245 light chain (192 aa).

Residues 2 to 7 are Cytoplasmic-facing; it reads GQIEWA. The helical transmembrane segment at 8-30 threads the bilayer; sequence MWANEQALASGLILITGGIVATA. Topologically, residues 31-35 are extracellular; it reads GRFTQ. A helical transmembrane segment spans residues 36 to 53; that stretch reads WYFGAYSIAAGVLICLLE. Residues 54–69 are Cytoplasmic-facing; it reads YPRGKRKKGSTMERCG. Residues 70 to 80 lie within the membrane without spanning it; sequence QKYLTSVVKLF. Residues 81–86 lie on the Cytoplasmic side of the membrane; the sequence is GPLTRN. The chain crosses the membrane as a helical span at residues 87-104; sequence YYVRAALHFLLSVPAGFL. Residue Leu-105 is a topological domain, extracellular. Residues 106–126 traverse the membrane as a helical segment; sequence ATILGTVCLAIASVIYLLAAI. At 127–192 the chain is on the cytoplasmic side; that stretch reads RGEQWTPIEP…NPMPVTDEVV (66 aa). A disordered region spans residues 134 to 192; sequence IEPKPKERPQVGGTIKQPPTNPPPRPPAEVRKKPSEGEEEAASAGGPQVNPMPVTDEVV. Thr-147 carries the phosphothreonine modification. Lys-149 is covalently cross-linked (Glycyl lysine isopeptide (Lys-Gly) (interchain with G-Cter in ubiquitin)). 2 positions are modified to phosphoserine: Ser-168 and Ser-176.

The protein belongs to the p22phox family. In terms of assembly, component of the phagocyte NADPH oxidase core complex/cytochrome b558 complex, composed of CYBB (heavy chain (beta)) and CYBA (light chain (alpha)). Component of the phagocyte NADPH oxidase complex composed of an obligatory core heterodimer formed by the membrane proteins CYBA and CYBB and the cytosolic regulatory subunits NCF1/p47-phox, NCF2/p67-phox, NCF4/p40-phox and the small GTPase RAC1 or RAC2. Interacts with NCF1 (via SH3 domain). Interacts with SH3PXD2A. Interacts with DUOX1, DUOX2 and TPO. Interacts with NOX4; this interaction mediates superoxide generation. Interacts with calprotectin (S100A8/9). Interacts with GBP7. Interacts with NOXO1. Forms a heterodimer with NOX3 and is essential for activity and cell membrane localization of NOX3. Interacts with NOX1. Post-translationally, ubiquitinated at Lys-149 likely by RNF145. Phosphorylation at Thr-147 enhances NADPH oxidase activity by promoting NCF1/p47-phox binding. The strongest level of expression is found in kidney, peritoneal neutrophils and peritoneal macrophages, and a lower level in spleen and small intestine. Very low level of expression can be noted in brain, liver, testis, and heart.

It localises to the cell membrane. Subunit of NADPH oxidase complexes that is required for the NADPH oxidase activity that generates, in various cell types, superoxide from molecular oxygen utilizing NADPH as an electron donor. Subunit of the phagocyte NADPH oxidase complex that mediates the transfer of electrons from cytosolic NADPH to O2 to produce the superoxide anion (O2(-)). In the activated complex, electrons are first transferred from NADPH to flavin adenine dinucleotide (FAD) and subsequently transferred via two heme molecules to molecular oxygen, producing superoxide through an outer-sphere reaction. Activation of the NADPH oxidase complex is initiated by the assembly of cytosolic subunits of the NADPH oxidase complex with the core NADPH oxidase complex to form a complex at the plasma membrane or phagosomal membrane. This activation process is initiated by phosphorylation dependent binding of the cytosolic NCF1/p47-phox subunit to the C-terminus of CYBA/p22-phox. Aassociates with NOX3 to form a functional NADPH oxidase constitutively generating superoxide. The chain is Cytochrome b-245 light chain from Mus musculus (Mouse).